We begin with the raw amino-acid sequence, 172 residues long: Adenine phosphoribosyltransferase (172 aa).

It belongs to the purine/pyrimidine phosphoribosyltransferase family. Homodimer.

The protein localises to the cytoplasm. It catalyses the reaction AMP + diphosphate = 5-phospho-alpha-D-ribose 1-diphosphate + adenine. It participates in purine metabolism; AMP biosynthesis via salvage pathway; AMP from adenine: step 1/1. Its function is as follows. Catalyzes a salvage reaction resulting in the formation of AMP, that is energically less costly than de novo synthesis. The chain is Adenine phosphoribosyltransferase from Staphylococcus saprophyticus subsp. saprophyticus (strain ATCC 15305 / DSM 20229 / NCIMB 8711 / NCTC 7292 / S-41).